The primary structure comprises 204 residues: Potassium-transporting ATPase KdpC subunit (204 aa).

A helical transmembrane segment spans residues 21–41; it reads AALVIFVGLSLVTGVLYPVVV.

It belongs to the KdpC family. In terms of assembly, the system is composed of three essential subunits: KdpA, KdpB and KdpC.

It is found in the cell inner membrane. Its function is as follows. Part of the high-affinity ATP-driven potassium transport (or Kdp) system, which catalyzes the hydrolysis of ATP coupled with the electrogenic transport of potassium into the cytoplasm. This subunit acts as a catalytic chaperone that increases the ATP-binding affinity of the ATP-hydrolyzing subunit KdpB by the formation of a transient KdpB/KdpC/ATP ternary complex. The chain is Potassium-transporting ATPase KdpC subunit from Ralstonia nicotianae (strain ATCC BAA-1114 / GMI1000) (Ralstonia solanacearum).